Here is a 52-residue protein sequence, read N- to C-terminus: Ribosome biogenesis protein Nop10 (52 aa).

Belongs to the NOP10 family.

In terms of biological role, involved in ribosome biogenesis; more specifically in 18S rRNA pseudouridylation and in cleavage of pre-rRNA. The polypeptide is Ribosome biogenesis protein Nop10 (Methanococcus vannielii (strain ATCC 35089 / DSM 1224 / JCM 13029 / OCM 148 / SB)).